The sequence spans 191 residues: dTTP/UTP pyrophosphatase (191 aa).

The active-site Proton acceptor is Asp-69.

The protein belongs to the Maf family. YhdE subfamily. A divalent metal cation serves as cofactor.

Its subcellular location is the cytoplasm. It carries out the reaction dTTP + H2O = dTMP + diphosphate + H(+). It catalyses the reaction UTP + H2O = UMP + diphosphate + H(+). Nucleoside triphosphate pyrophosphatase that hydrolyzes dTTP and UTP. May have a dual role in cell division arrest and in preventing the incorporation of modified nucleotides into cellular nucleic acids. In Desulforamulus reducens (strain ATCC BAA-1160 / DSM 100696 / MI-1) (Desulfotomaculum reducens), this protein is dTTP/UTP pyrophosphatase.